The chain runs to 206 residues: dITP/XTP pyrophosphatase (206 aa).

Residue 7–12 (SCHGYK) participates in substrate binding. D70 acts as the Proton acceptor in catalysis. D70 is a Mg(2+) binding site. Residues T71, 154–157 (FGYD), K177, and 182–183 (HR) each bind substrate.

Belongs to the HAM1 NTPase family. Homodimer. Mg(2+) is required as a cofactor.

The enzyme catalyses XTP + H2O = XMP + diphosphate + H(+). The catalysed reaction is dITP + H2O = dIMP + diphosphate + H(+). It carries out the reaction ITP + H2O = IMP + diphosphate + H(+). Pyrophosphatase that catalyzes the hydrolysis of nucleoside triphosphates to their monophosphate derivatives, with a high preference for the non-canonical purine nucleotides XTP (xanthosine triphosphate), dITP (deoxyinosine triphosphate) and ITP. Seems to function as a house-cleaning enzyme that removes non-canonical purine nucleotides from the nucleotide pool, thus preventing their incorporation into DNA/RNA and avoiding chromosomal lesions. This chain is dITP/XTP pyrophosphatase, found in Chlamydia caviae (strain ATCC VR-813 / DSM 19441 / 03DC25 / GPIC) (Chlamydophila caviae).